The following is a 275-amino-acid chain: Formamidopyrimidine-DNA glycosylase (275 aa).

Catalysis depends on Pro-2, which acts as the Schiff-base intermediate with DNA. Glu-3 (proton donor) is an active-site residue. Lys-58 functions as the Proton donor; for beta-elimination activity in the catalytic mechanism. DNA is bound by residues His-91 and Arg-110. Residues 238-272 (QVYGQTGKSCPRCGQAIVKLKVGGRGTHICPKCQK) form an FPG-type zinc finger. Arg-262 functions as the Proton donor; for delta-elimination activity in the catalytic mechanism.

It belongs to the FPG family. As to quaternary structure, monomer. Zn(2+) serves as cofactor.

The enzyme catalyses Hydrolysis of DNA containing ring-opened 7-methylguanine residues, releasing 2,6-diamino-4-hydroxy-5-(N-methyl)formamidopyrimidine.. The catalysed reaction is 2'-deoxyribonucleotide-(2'-deoxyribose 5'-phosphate)-2'-deoxyribonucleotide-DNA = a 3'-end 2'-deoxyribonucleotide-(2,3-dehydro-2,3-deoxyribose 5'-phosphate)-DNA + a 5'-end 5'-phospho-2'-deoxyribonucleoside-DNA + H(+). Its function is as follows. Involved in base excision repair of DNA damaged by oxidation or by mutagenic agents. Acts as a DNA glycosylase that recognizes and removes damaged bases. Has a preference for oxidized purines, such as 7,8-dihydro-8-oxoguanine (8-oxoG). Has AP (apurinic/apyrimidinic) lyase activity and introduces nicks in the DNA strand. Cleaves the DNA backbone by beta-delta elimination to generate a single-strand break at the site of the removed base with both 3'- and 5'-phosphates. In Streptococcus pyogenes serotype M3 (strain ATCC BAA-595 / MGAS315), this protein is Formamidopyrimidine-DNA glycosylase.